A 318-amino-acid chain; its full sequence is D-alanine--D-alanine ligase (318 aa).

The region spanning 116 to 311 is the ATP-grasp domain; it reads KQVWQSLGIP…FQQLVLAILA (196 aa). An ATP-binding site is contributed by 142–197; the sequence is SAELGFPLIVKPAHEGSSIGMAKVNSEQELVAAWKDAAKYDSQVLVEQWIHGPEFT. Residues Asp-265, Glu-278, and Asn-280 each coordinate Mg(2+).

The protein belongs to the D-alanine--D-alanine ligase family. Mg(2+) is required as a cofactor. Mn(2+) serves as cofactor.

The protein localises to the cytoplasm. It catalyses the reaction 2 D-alanine + ATP = D-alanyl-D-alanine + ADP + phosphate + H(+). The protein operates within cell wall biogenesis; peptidoglycan biosynthesis. Cell wall formation. The protein is D-alanine--D-alanine ligase of Pseudomonas entomophila (strain L48).